A 331-amino-acid chain; its full sequence is Ribosomal RNA small subunit methyltransferase H (331 aa).

S-adenosyl-L-methionine is bound by residues 49 to 51 (GGH), Asp-68, Leu-102, Asp-116, and Gln-123.

This sequence belongs to the methyltransferase superfamily. RsmH family.

It is found in the cytoplasm. It carries out the reaction cytidine(1402) in 16S rRNA + S-adenosyl-L-methionine = N(4)-methylcytidine(1402) in 16S rRNA + S-adenosyl-L-homocysteine + H(+). Its function is as follows. Specifically methylates the N4 position of cytidine in position 1402 (C1402) of 16S rRNA. The protein is Ribosomal RNA small subunit methyltransferase H of Renibacterium salmoninarum (strain ATCC 33209 / DSM 20767 / JCM 11484 / NBRC 15589 / NCIMB 2235).